Here is a 1486-residue protein sequence, read N- to C-terminus: Chromosome partition protein MukB (1486 aa).

34–41 (GGNGAGKS) serves as a coordination point for ATP. Coiled-coil stretches lie at residues 326-418 (LEAD…QYNQ), 444-480 (LETFQAKELEATEKMLSLEQKMSMAQTAHSQFEQAYQ), and 509-603 (RHLA…RAPV). The tract at residues 666-783 (PGGSEDQRLN…EVPLFGRAAR (118 aa)) is flexible hinge. Coiled coils occupy residues 835–923 (EAEI…AKLE), 977–1115 (EMLS…TAKA), and 1209–1266 (VEAI…QNVS).

It belongs to the SMC family. MukB subfamily. In terms of assembly, homodimerization via its hinge domain. Binds to DNA via its C-terminal region. Interacts, and probably forms a ternary complex, with MukE and MukF via its C-terminal region. The complex formation is stimulated by calcium or magnesium. Interacts with tubulin-related protein FtsZ.

It is found in the cytoplasm. It localises to the nucleoid. Its function is as follows. Plays a central role in chromosome condensation, segregation and cell cycle progression. Functions as a homodimer, which is essential for chromosome partition. Involved in negative DNA supercoiling in vivo, and by this means organize and compact chromosomes. May achieve or facilitate chromosome segregation by condensation DNA from both sides of a centrally located replisome during cell division. This is Chromosome partition protein MukB from Escherichia coli O17:K52:H18 (strain UMN026 / ExPEC).